The chain runs to 322 residues: Biotin synthase (322 aa).

Residues 39–266 (NQIQVSSLLN…KSVVRLSAGR (228 aa)) enclose the Radical SAM core domain. Residues Cys-54, Cys-58, and Cys-61 each coordinate [4Fe-4S] cluster. [2Fe-2S] cluster is bound by residues Cys-98, Cys-129, Cys-189, and Arg-261.

Belongs to the radical SAM superfamily. Biotin synthase family. As to quaternary structure, homodimer. [4Fe-4S] cluster serves as cofactor. It depends on [2Fe-2S] cluster as a cofactor.

The catalysed reaction is (4R,5S)-dethiobiotin + (sulfur carrier)-SH + 2 reduced [2Fe-2S]-[ferredoxin] + 2 S-adenosyl-L-methionine = (sulfur carrier)-H + biotin + 2 5'-deoxyadenosine + 2 L-methionine + 2 oxidized [2Fe-2S]-[ferredoxin]. It participates in cofactor biosynthesis; biotin biosynthesis; biotin from 7,8-diaminononanoate: step 2/2. Its function is as follows. Catalyzes the conversion of dethiobiotin (DTB) to biotin by the insertion of a sulfur atom into dethiobiotin via a radical-based mechanism. The sequence is that of Biotin synthase from Ruthia magnifica subsp. Calyptogena magnifica.